The chain runs to 95 residues: Large ribosomal subunit protein bL28 (95 aa).

The protein belongs to the bacterial ribosomal protein bL28 family.

In Zymomonas mobilis subsp. mobilis (strain ATCC 31821 / ZM4 / CP4), this protein is Large ribosomal subunit protein bL28.